The sequence spans 314 residues: tRNA pseudouridine synthase B (314 aa).

Residue Asp54 is the Nucleophile of the active site.

This sequence belongs to the pseudouridine synthase TruB family. Type 1 subfamily.

The catalysed reaction is uridine(55) in tRNA = pseudouridine(55) in tRNA. In terms of biological role, responsible for synthesis of pseudouridine from uracil-55 in the psi GC loop of transfer RNAs. In Ralstonia nicotianae (strain ATCC BAA-1114 / GMI1000) (Ralstonia solanacearum), this protein is tRNA pseudouridine synthase B.